The sequence spans 397 residues: Phosphoglycerate kinase (397 aa).

Residues 19–21 (DFN), arginine 35, 58–61 (HLGR), arginine 117, and arginine 150 contribute to the substrate site. Residues lysine 201, glutamate 323, and 349-352 (GGDS) each bind ATP.

It belongs to the phosphoglycerate kinase family. In terms of assembly, monomer.

Its subcellular location is the cytoplasm. It catalyses the reaction (2R)-3-phosphoglycerate + ATP = (2R)-3-phospho-glyceroyl phosphate + ADP. It functions in the pathway carbohydrate degradation; glycolysis; pyruvate from D-glyceraldehyde 3-phosphate: step 2/5. In Syntrophobacter fumaroxidans (strain DSM 10017 / MPOB), this protein is Phosphoglycerate kinase.